The following is a 344-amino-acid chain: Anthranilate phosphoribosyltransferase (344 aa).

5-phospho-alpha-D-ribose 1-diphosphate is bound by residues Gly83, 86–87, Thr91, 93–96, 111–119, and Ser123; these read GD, NIST, and KHGGRSVSS. Gly83 contributes to the anthranilate binding site. Residue Ser95 participates in Mg(2+) binding. Arg169 is a binding site for anthranilate. Asp228 and Glu229 together coordinate Mg(2+).

It belongs to the anthranilate phosphoribosyltransferase family. In terms of assembly, homodimer. It depends on Mg(2+) as a cofactor.

The catalysed reaction is N-(5-phospho-beta-D-ribosyl)anthranilate + diphosphate = 5-phospho-alpha-D-ribose 1-diphosphate + anthranilate. The protein operates within amino-acid biosynthesis; L-tryptophan biosynthesis; L-tryptophan from chorismate: step 2/5. Functionally, catalyzes the transfer of the phosphoribosyl group of 5-phosphorylribose-1-pyrophosphate (PRPP) to anthranilate to yield N-(5'-phosphoribosyl)-anthranilate (PRA). This Methylibium petroleiphilum (strain ATCC BAA-1232 / LMG 22953 / PM1) protein is Anthranilate phosphoribosyltransferase.